The following is a 500-amino-acid chain: Probable cytosol aminopeptidase (500 aa).

Mn(2+) is bound by residues K268 and D273. K280 is an active-site residue. Mn(2+) is bound by residues D291, D350, and E352. R354 is an active-site residue.

This sequence belongs to the peptidase M17 family. The cofactor is Mn(2+).

The protein localises to the cytoplasm. It carries out the reaction Release of an N-terminal amino acid, Xaa-|-Yaa-, in which Xaa is preferably Leu, but may be other amino acids including Pro although not Arg or Lys, and Yaa may be Pro. Amino acid amides and methyl esters are also readily hydrolyzed, but rates on arylamides are exceedingly low.. The enzyme catalyses Release of an N-terminal amino acid, preferentially leucine, but not glutamic or aspartic acids.. Its function is as follows. Presumably involved in the processing and regular turnover of intracellular proteins. Catalyzes the removal of unsubstituted N-terminal amino acids from various peptides. This Azoarcus sp. (strain BH72) protein is Probable cytosol aminopeptidase.